Consider the following 406-residue polypeptide: Tubby-like F-box protein 3 (406 aa).

The region spanning 50–105 (SCWASMPPELLRDVLMRIEQSEDTWPSRKNVVSCAGVCRNWREIVKEIVRVPELSS) is the F-box domain.

It belongs to the TUB family. As to expression, ubiquitous at low levels. Not detected in mature siliques.

It localises to the cell membrane. Its subcellular location is the plastid. It is found in the nucleus. The protein localises to the nucleoplasm. The protein resides in the cytoplasm. In terms of biological role, involved in abiotic stress signaling. Tethered to plasma membrane (PM) and probably bound to phosphatidylinositol 4,5-bisphosphate. Abiotic stresses (drought, salt, H(2)O(2)) trigger phospholipase C mediated PM dislogement and plastidial and nucleocytosolic relocation of TULP3. This Arabidopsis thaliana (Mouse-ear cress) protein is Tubby-like F-box protein 3.